Here is a 331-residue protein sequence, read N- to C-terminus: tRNA(Ile)-lysidine synthase (331 aa).

An ATP-binding site is contributed by 29-34 (SGGPDS).

Belongs to the tRNA(Ile)-lysidine synthase family.

The protein localises to the cytoplasm. The enzyme catalyses cytidine(34) in tRNA(Ile2) + L-lysine + ATP = lysidine(34) in tRNA(Ile2) + AMP + diphosphate + H(+). Ligates lysine onto the cytidine present at position 34 of the AUA codon-specific tRNA(Ile) that contains the anticodon CAU, in an ATP-dependent manner. Cytidine is converted to lysidine, thus changing the amino acid specificity of the tRNA from methionine to isoleucine. This Chlorobaculum tepidum (strain ATCC 49652 / DSM 12025 / NBRC 103806 / TLS) (Chlorobium tepidum) protein is tRNA(Ile)-lysidine synthase.